The chain runs to 320 residues: Cytochrome f (320 aa).

The signal sequence occupies residues 1 to 35 (MQNRNTFSWVKDQMSRFISVSIMIYVITRTSISNA). Y36, C56, C59, and H60 together coordinate heme. The helical transmembrane segment at 286-306 (VQGLLFFFASVILAQIFLVLK) threads the bilayer.

It belongs to the cytochrome f family. The 4 large subunits of the cytochrome b6-f complex are cytochrome b6, subunit IV (17 kDa polypeptide, petD), cytochrome f and the Rieske protein, while the 4 small subunits are PetG, PetL, PetM and PetN. The complex functions as a dimer. Requires heme as cofactor.

The protein resides in the plastid. The protein localises to the chloroplast thylakoid membrane. Functionally, component of the cytochrome b6-f complex, which mediates electron transfer between photosystem II (PSII) and photosystem I (PSI), cyclic electron flow around PSI, and state transitions. This Ceratophyllum demersum (Rigid hornwort) protein is Cytochrome f.